Reading from the N-terminus, the 170-residue chain is Large ribosomal subunit protein uL10 (170 aa).

It belongs to the universal ribosomal protein uL10 family. Part of the ribosomal stalk of the 50S ribosomal subunit. The N-terminus interacts with L11 and the large rRNA to form the base of the stalk. The C-terminus forms an elongated spine to which L12 dimers bind in a sequential fashion forming a multimeric L10(L12)X complex.

Its function is as follows. Forms part of the ribosomal stalk, playing a central role in the interaction of the ribosome with GTP-bound translation factors. The polypeptide is Large ribosomal subunit protein uL10 (rplJ) (Chlamydia pneumoniae (Chlamydophila pneumoniae)).